Reading from the N-terminus, the 335-residue chain is Biotin synthase (335 aa).

The Radical SAM core domain maps to 46–274 (YDIQLASLFS…ESKIRLSAGR (229 aa)). [4Fe-4S] cluster-binding residues include cysteine 61, cysteine 65, and cysteine 68. Positions 105, 137, 197, and 269 each coordinate [2Fe-2S] cluster.

It belongs to the radical SAM superfamily. Biotin synthase family. In terms of assembly, homodimer. It depends on [4Fe-4S] cluster as a cofactor. [2Fe-2S] cluster is required as a cofactor.

The enzyme catalyses (4R,5S)-dethiobiotin + (sulfur carrier)-SH + 2 reduced [2Fe-2S]-[ferredoxin] + 2 S-adenosyl-L-methionine = (sulfur carrier)-H + biotin + 2 5'-deoxyadenosine + 2 L-methionine + 2 oxidized [2Fe-2S]-[ferredoxin]. It participates in cofactor biosynthesis; biotin biosynthesis; biotin from 7,8-diaminononanoate: step 2/2. Functionally, catalyzes the conversion of dethiobiotin (DTB) to biotin by the insertion of a sulfur atom into dethiobiotin via a radical-based mechanism. This chain is Biotin synthase, found in Prochlorococcus marinus (strain MIT 9301).